Here is a 2555-residue protein sequence, read N- to C-terminus: Neurogenic locus notch homolog protein 1 (2555 aa).

The signal sequence occupies residues 1 to 18 (MPPLLAPLLCLALLPALA). The Extracellular segment spans residues 19–1735 (ARGPRCSQPG…VEPPPPAQLH (1717 aa)). 4 EGF-like domains span residues 20–58 (RGPRCSQPGETCLNGGKCEAANGTEACVCGGAFVGPRCQ), 59–99 (DPNP…PLCL), 102–139 (LDNACLTNPCRNGGTCDLLTLTEYKCRCPPGWSGKSCQ), and 140–176 (QADPCASNPCANGGQCLPFEASYICHCPPSFHGPTCR). 33 cysteine pairs are disulfide-bonded: Cys-24-Cys-37, Cys-31-Cys-46, Cys-48-Cys-57, Cys-63-Cys-74, Cys-68-Cys-87, Cys-89-Cys-98, Cys-106-Cys-117, Cys-111-Cys-127, Cys-129-Cys-138, Cys-144-Cys-155, Cys-149-Cys-164, Cys-166-Cys-175, Cys-182-Cys-195, Cys-189-Cys-204, Cys-206-Cys-215, Cys-222-Cys-233, Cys-227-Cys-243, Cys-245-Cys-254, Cys-261-Cys-272, Cys-266-Cys-281, Cys-283-Cys-292, Cys-299-Cys-312, Cys-306-Cys-321, Cys-323-Cys-332, Cys-339-Cys-350, Cys-344-Cys-359, Cys-361-Cys-370, Cys-376-Cys-387, Cys-381-Cys-398, Cys-400-Cys-409, Cys-416-Cys-429, Cys-423-Cys-438, and Cys-440-Cys-449. Asn-41 is a glycosylation site (N-linked (GlcNAc...) asparagine). O-linked (Glc...) serine glycosylation occurs at Ser-65. Thr-73 is a glycosylation site (O-linked (Fuc...) threonine). O-linked (Fuc...) threonine glycosylation is present at Thr-116. O-linked (Glc...) serine glycosylation is present at Ser-146. The EGF-like 5; calcium-binding domain maps to 178 to 216 (DVNECGQKPGLCRHGGTCHNEVGSYRCVCRATHTGPNCE). O-linked (Fuc...) threonine glycosylation is present at Thr-194. Residues 218–255 (PYVPCSPSPCQNGGTCRPTGDVTHECACLPGFTGQNCE) enclose the EGF-like 6 domain. O-linked (Fuc...) threonine; alternate glycosylation occurs at Thr-232. Thr-232 carries O-linked (GalNAc...) threonine; alternate glycosylation. The region spanning 257 to 293 (NIDDCPGNNCKNGGACVDGVNTYNCRCPPEWTGQYCT) is the EGF-like 7; calcium-binding domain. Residues 295–333 (DVDECQLMPNACQNGGTCHNTHGGYNCVCVNGWTGEDCS) form the EGF-like 8; calcium-binding domain. An O-linked (Fuc...) threonine glycan is attached at Thr-311. The EGF-like 9; calcium-binding domain occupies 335-371 (NIDDCASAACFHGATCHDRVASFYCECPHGRTGLLCH). O-linked (Glc...) serine glycosylation is present at Ser-341. Thr-349 carries an O-linked (Fuc...) threonine glycan. The region spanning 372–410 (LNDACISNPCNEGSNCDTNPVNGKAICTCPSGYTGPACS) is the EGF-like 10 domain. The O-linked (Glc...) serine glycan is linked to Ser-378. The EGF-like 11; calcium-binding domain occupies 412–450 (DVDECSLGANPCEHAGKCINTLGSFECQCLQGYTGPRCE). The interaction with DLL4 stretch occupies residues 420–421 (AN). Positions 432 and 435 each coordinate Ca(2+). Ser-435 carries an O-linked (Glc...) serine glycan. Positions 448–452 (RCEID) are interaction with DLL4. Ca(2+) is bound by residues Asp-452, Val-453, and Glu-455. Residues 452–488 (DVNECVSNPCQNDATCLDQIGEFQCICMPGYEGVHCE) form the EGF-like 12; calcium-binding domain. Intrachain disulfides connect Cys-456-Cys-467, Cys-461-Cys-476, and Cys-478-Cys-487. The O-linked (Glc...) serine glycan is linked to Ser-458. Thr-466 is a glycosylation site (O-linked (Fuc...) threonine). Positions 469 and 470 each coordinate Ca(2+). Ca(2+) contacts are provided by Asn-490, Thr-491, and Glu-493. Residues 490-526 (NTDECASSPCLHNGRCLDKINEFQCECPTGFTGHLCQ) form the EGF-like 13; calcium-binding domain. 74 cysteine pairs are disulfide-bonded: Cys-494-Cys-505, Cys-499-Cys-514, Cys-516-Cys-525, Cys-532-Cys-543, Cys-537-Cys-552, Cys-554-Cys-563, Cys-570-Cys-580, Cys-575-Cys-589, Cys-591-Cys-600, Cys-607-Cys-618, Cys-612-Cys-627, Cys-629-Cys-638, Cys-645-Cys-655, Cys-650-Cys-664, Cys-666-Cys-675, Cys-682-Cys-693, Cys-687-Cys-702, Cys-704-Cys-713, Cys-720-Cys-730, Cys-725-Cys-739, Cys-741-Cys-750, Cys-757-Cys-768, Cys-762-Cys-777, Cys-779-Cys-788, Cys-795-Cys-806, Cys-800-Cys-815, Cys-817-Cys-826, Cys-833-Cys-844, Cys-838-Cys-855, Cys-857-Cys-866, Cys-873-Cys-884, Cys-878-Cys-893, Cys-895-Cys-904, Cys-911-Cys-922, Cys-916-Cys-931, Cys-933-Cys-942, Cys-949-Cys-960, Cys-954-Cys-969, Cys-971-Cys-980, Cys-987-Cys-998, Cys-992-Cys-1007, Cys-1009-Cys-1018, Cys-1025-Cys-1036, Cys-1030-Cys-1045, Cys-1047-Cys-1056, Cys-1063-Cys-1074, Cys-1068-Cys-1083, Cys-1085-Cys-1094, Cys-1101-Cys-1122, Cys-1116-Cys-1131, Cys-1133-Cys-1142, Cys-1149-Cys-1160, Cys-1154-Cys-1169, Cys-1171-Cys-1180, Cys-1187-Cys-1198, Cys-1192-Cys-1207, Cys-1209-Cys-1218, Cys-1238-Cys-1253, Cys-1255-Cys-1264, Cys-1271-Cys-1284, Cys-1276-Cys-1293, Cys-1295-Cys-1304, Cys-1311-Cys-1322, Cys-1316-Cys-1334, Cys-1336-Cys-1345, Cys-1352-Cys-1363, Cys-1357-Cys-1372, Cys-1374-Cys-1383, Cys-1391-Cys-1403, Cys-1397-Cys-1414, Cys-1416-Cys-1425, Cys-1449-Cys-1472, Cys-1454-Cys-1467, and Cys-1463-Cys-1479. Residue Ser-496 is glycosylated (O-linked (Glc...) serine). 2 residues coordinate Ca(2+): Asp-507 and Lys-508. The 37-residue stretch at 528–564 (DVDECASTPCKNGAKCLDGPNTYTCVCTEGYTGTHCE) folds into the EGF-like 14; calcium-binding domain. Ser-534 is a glycosylation site (O-linked (Glc...) serine). The 36-residue stretch at 566-601 (DIDECDPDPCHYGSCKDGVATFTCLCRPGYTGHHCE) folds into the EGF-like 15; calcium-binding domain. The EGF-like 16; calcium-binding domain occupies 603–639 (NINECSSQPCRHGGTCQDRDNAYLCFCLKGTTGPNCE). O-linked (Glc...) serine glycosylation is present at Ser-609. A glycan (O-linked (Fuc...) threonine) is linked at Thr-617. The region spanning 641–676 (NLDDCASSPCDSGTCLDKIDGYECACEPGYTGSMCN) is the EGF-like 17; calcium-binding domain. A glycan (O-linked (Glc...) serine) is linked at Ser-647. Positions 678-714 (NIDECAGNPCHNGGTCEDGINGFTCRCPEGYHDPTCL) constitute an EGF-like 18; calcium-binding domain. O-linked (Fuc...) threonine glycosylation occurs at Thr-692. The region spanning 716–751 (EVNECNSNPCVHGACRDSLNGYKCDCDPGWSGTNCD) is the EGF-like 19; calcium-binding domain. An O-linked (Glc...) serine glycan is attached at Ser-722. Residues 753–789 (NNNECESNPCVNGGTCKDMTSGYVCTCREGFSGPNCQ) form the EGF-like 20 domain. The O-linked (Glc...) serine glycan is linked to Ser-759. An O-linked (Fuc...) threonine glycan is attached at Thr-767. O-linked (GlcNAc) serine glycosylation is present at Ser-784. Residues 791-827 (NINECASNPCLNQGTCIDDVAGYKCNCLLPYTGATCE) form the EGF-like 21; calcium-binding domain. O-linked (Glc...) serine glycosylation is present at Ser-797. A glycan (O-linked (Fuc...) threonine) is linked at Thr-805. Residues 829 to 867 (VLAPCAPSPCRNGGECRQSEDYESFSCVCPTGWQGQTCE) form the EGF-like 22 domain. One can recognise an EGF-like 23; calcium-binding domain in the interval 869–905 (DINECVLSPCRHGASCQNTHGGYRCHCQAGYSGRNCE). The region spanning 907–943 (DIDDCRPNPCHNGGSCTDGINTAFCDCLPGFRGTFCE) is the EGF-like 24 domain. Ser-921 is a glycosylation site (O-linked (Fuc) serine). An EGF-like 25; calcium-binding domain is found at 945-981 (DINECASDPCRNGANCTDCVDSYTCTCPAGFSGIHCE). Ser-951 carries an O-linked (Glc...) serine glycan. Residue Asn-959 is glycosylated (N-linked (GlcNAc...) asparagine). 5 consecutive EGF-like domains span residues 983 to 1019 (NTPDCTESSCFNGGTCVDGINSFTCLCPPGFTGSYCQ), 1021 to 1057 (DVNECDSQPCLHGGTCQDGCGSYRCTCPQGYTGPNCQ), 1059 to 1095 (LVHWCDSSPCKNGGKCWQTHTQYRCECPSGWTGLYCD), 1097 to 1143 (PSVS…SYCE), and 1145 to 1181 (LVDECSPSPCQNGATCTDYLGGYSCKCVAGYHGVNCS). O-linked (Fuc...) threonine glycosylation occurs at Thr-997. An O-linked (Glc...) serine glycan is attached at Ser-1027. A glycan (O-linked (Fuc...) threonine) is linked at Thr-1035. Residue Ser-1065 is glycosylated (O-linked (Glc...) serine). An O-linked (Fuc...) threonine glycan is attached at Thr-1159. A glycan (N-linked (GlcNAc...) asparagine) is linked at Asn-1179. The 37-residue stretch at 1183 to 1219 (EIDECLSHPCQNGGTCLDLPNTYKCSCPRGTQGVHCE) folds into the EGF-like 31; calcium-binding domain. Ser-1189 carries O-linked (Glc...) serine glycosylation. Thr-1197 carries O-linked (Fuc...) threonine glycosylation. Residues 1221–1265 (NVDDCNPPVDPVSRSPKCFNNGTCVDQVGGYSCTCPPGFVGERCE) enclose the EGF-like 32; calcium-binding domain. Residue Asn-1241 is glycosylated (N-linked (GlcNAc...) asparagine). EGF-like domains are found at residues 1267–1305 (DVNECLSNPCDARGTQNCVQRVNDFHCECRAGHTGRRCE), 1307–1346 (VINGCKGKPCKNGGTCAVASNTARGFICKCPAGFEGATCE), 1348–1384 (DARTCGSLRCLNGGTCISGPRSPTCLCLGPFTGPECQ), and 1387–1426 (ASSPCLGGNPCYNQGTCEPTSESPFYRCLCPAKFNGLLCH). The O-linked (Glc...) serine glycan is linked to Ser-1273. O-linked (Fuc...) threonine glycosylation is present at Thr-1362. Thr-1379 carries an O-linked (GlcNAc...) threonine glycan. The O-linked (Fuc...) threonine; alternate glycan is linked to Thr-1402. An O-linked (GalNAc...) threonine; alternate glycan is attached at Thr-1402. 3 LNR repeats span residues 1449 to 1489 (CELP…PWKN), 1490 to 1531 (CTQS…CNPL), and 1532 to 1571 (YDQYCKDHFSDGHCDQGCNSAECEWDGLDCAEHVPERLAA). Positions 1457, 1460, 1475, and 1478 each coordinate Ca(2+). N-linked (GlcNAc...) asparagine glycosylation is present at Asn-1489. 5 disulfides stabilise this stretch: Cys-1490/Cys-1514, Cys-1496/Cys-1509, Cys-1505/Cys-1521, Cys-1536/Cys-1549, and Cys-1545/Cys-1561. Asn-1587 carries N-linked (GlcNAc...) asparagine glycosylation. Thr-1725 is a glycosylation site (O-linked (GalNAc...) threonine). An interaction with PSEN1 region spans residues 1728-1760 (PPPPAQLHFMYVAAAAFVLLFFVGCGVLLSRKR). Residues 1736 to 1756 (FMYVAAAAFVLLFFVGCGVLL) traverse the membrane as a helical segment. The Cytoplasmic portion of the chain corresponds to 1757-2555 (SRKRRRQHGQ…QIARIPEAFK (799 aa)). Residue Lys-1759 forms a Glycyl lysine isopeptide (Lys-Gly) (interchain with G-Cter in ubiquitin) linkage. A disordered region spans residues 1780 to 1808 (KKKRREPLGEDSVGLKPLKNASDGALMDD). Thr-1861 is modified (phosphothreonine). ANK repeat units follow at residues 1927 to 1956 (TGETALHLAARYSRSDAAKRLLEASADANI), 1960 to 1990 (MGRTPLHAAVSADAQGVFQILIRNRATDLDA), 1994 to 2023 (DGTTPLILAARLAVEGMLEDLINSHADVNA), 2027 to 2056 (LGKSALHWAAAVNNVDAAVVLLKNGANKDM), 2060 to 2089 (REETPLFLAAREGSYETAKVLLDHFANRDI), and 2095 to 2122 (RLPRDIAQERMHHDIVRLLDEYNLVRSP). The interval 1947-1955 (LLEASADAN) is HIF1AN-binding. Asn-1955 carries the post-translational modification (3S)-3-hydroxyasparagine; by HIF1AN; partial. The segment at 2014–2022 (LINSHADVN) is HIF1AN-binding. Asn-2022 bears the (3S)-3-hydroxyasparagine; by HIF1AN mark. Disordered stretches follow at residues 2151 to 2194 (PGVQ…LDSS), 2379 to 2447 (LVQT…QPLG), and 2483 to 2555 (TPPS…EAFK). Over residues 2379–2408 (LVQTQQVQPQNLQMQQQNLQPANIQQQQSL) the composition is skewed to low complexity. Residues 2483 to 2502 (TPPSQHSYSSPVDNTPSHQL) show a composition bias toward polar residues. The segment covering 2512 to 2527 (PSPESPDQWSSSSPHS) has biased composition (low complexity). The span at 2528 to 2547 (NVSDWSEGVSSPPTSMQSQI) shows a compositional bias: polar residues.

The protein belongs to the NOTCH family. In terms of assembly, heterodimer of a C-terminal fragment N(TM) and an N-terminal fragment N(EC) which are probably linked by disulfide bonds. Interacts with DNER, DTX1, DTX2 and RBPJ/RBPSUH. Also interacts with MAML1, MAML2 and MAML3 which act as transcriptional coactivators for NOTCH1. The NOTCH1 intracellular domain interacts with SNW1; the interaction involves multimerized NOTCH1 NICD and is implicated in a formation of an intermediate preactivation complex which associates with DNA-bound CBF-1/RBPJ. The activated membrane-bound form interacts with AAK1 which promotes NOTCH1 stabilization. Forms a trimeric complex with FBXW7 and SGK1. Interacts with HIF1AN. HIF1AN negatively regulates the function of notch intracellular domain (NICD), accelerating myogenic differentiation. Interacts (via NICD) with SNAI1 (via zinc fingers); the interaction induces SNAI1 degradation via MDM2-mediated ubiquitination and inhibits SNAI1-induced cell invasion. Interacts (via NICD) with MDM2A. Interacts (via NICD) with BCL6; the interaction decreases MAML1 recruitment by NOTCH1 NICD on target genes DNA and inhibits NOTCH1 transactivation activity. Interacts with THBS4. Interacts (via the EGF-like repeat region) with CCN3 (via CTCK domain). Interacts (via EGF-like domains) with DLL4 (via N-terminal DSL and MNNL domains). Interacts with ZMIZ1. Interacts (via NICD domain) with MEGF10 (via the cytoplasmic domain). Interacts with DLL1 and JAG1. Interacts (via NICD domain) with PRAG1. Forms a complex with PRAG1, N1ICD and MAML1, in a MAML1-dependent manner. Interacts (via transmembrane region) with PSEN1; the interaction is direct. Interacts with ZFP64. Synthesized in the endoplasmic reticulum as an inactive form which is proteolytically cleaved by a furin-like convertase in the trans-Golgi network before it reaches the plasma membrane to yield an active, ligand-accessible form. Cleavage results in a C-terminal fragment N(TM) and a N-terminal fragment N(EC). Following ligand binding, it is cleaved by ADAM17 to yield a membrane-associated intermediate fragment called notch extracellular truncation (NEXT). Following endocytosis, this fragment is then cleaved by one of the catalytic subunits of gamma-secretase (PSEN1 or PSEN2), to release a Notch-derived peptide containing the intracellular domain (NICD) from the membrane. In terms of processing, phosphorylated. Post-translationally, O-glycosylated on the EGF-like domains. O-glucosylated at Ser-435 by KDELC1 and KDELC2. Contains both O-linked fucose and O-linked glucose in the EGF-like domains 11, 12 and 13, which are interacting with the residues on DLL4. O-linked glycosylation by GALNT11 is involved in determination of left/right symmetry: glycosylation promotes activation of NOTCH1, possibly by promoting cleavage by ADAM17, modulating the balance between motile and immotile (sensory) cilia at the left-right organiser (LRO). MFNG-, RFNG- and LFNG-mediated modification of O-fucose residues at specific EGF-like domains results in inhibition of its activation by JAG1 and enhancement of its activation by DLL1 via an increased binding to DLL1. Ubiquitinated. Undergoes 'Lys-29'-linked polyubiquitination by ITCH; promotes the lysosomal degradation of non-activated internalized NOTCH1. Deubiquitination by USP12 is required for transport of internalized non-activated receptor from late endosomes to lysosomes for degradation. Monoubiquitination at Lys-1759 is required for activation by gamma-secretase cleavage, it promotes interaction with AAK1, which stabilizes it. Deubiquitination by EIF3F is necessary for nuclear import of activated Notch. In terms of processing, hydroxylated at Asn-1955 by HIF1AN. Hydroxylated at Asn-2022 by HIF1AN. Hydroxylation reduces affinity for HI1AN and may thus indirectly modulate negative regulation of NICD. As to expression, in fetal tissues most abundant in spleen, brain stem and lung. Also present in most adult tissues where it is found mainly in lymphoid tissues.

It localises to the cell membrane. It is found in the late endosome membrane. The protein localises to the nucleus. In terms of biological role, functions as a receptor for membrane-bound ligands Jagged-1 (JAG1), Jagged-2 (JAG2) and Delta-1 (DLL1) to regulate cell-fate determination. Upon ligand activation through the released notch intracellular domain (NICD) it forms a transcriptional activator complex with RBPJ/RBPSUH and activates genes of the enhancer of split locus. Affects the implementation of differentiation, proliferation and apoptotic programs. Involved in angiogenesis; negatively regulates endothelial cell proliferation and migration and angiogenic sprouting. Involved in the maturation of both CD4(+) and CD8(+) cells in the thymus. Important for follicular differentiation and possibly cell fate selection within the follicle. During cerebellar development, functions as a receptor for neuronal DNER and is involved in the differentiation of Bergmann glia. Represses neuronal and myogenic differentiation. May play an essential role in postimplantation development, probably in some aspect of cell specification and/or differentiation. May be involved in mesoderm development, somite formation and neurogenesis. May enhance HIF1A function by sequestering HIF1AN away from HIF1A. Required for the THBS4 function in regulating protective astrogenesis from the subventricular zone (SVZ) niche after injury. Involved in determination of left/right symmetry by modulating the balance between motile and immotile (sensory) cilia at the left-right organiser (LRO). This chain is Neurogenic locus notch homolog protein 1 (NOTCH1), found in Homo sapiens (Human).